The following is a 485-amino-acid chain: Aspartyl/glutamyl-tRNA(Asn/Gln) amidotransferase subunit B (485 aa).

The protein belongs to the GatB/GatE family. GatB subfamily. As to quaternary structure, heterotrimer of A, B and C subunits.

It carries out the reaction L-glutamyl-tRNA(Gln) + L-glutamine + ATP + H2O = L-glutaminyl-tRNA(Gln) + L-glutamate + ADP + phosphate + H(+). It catalyses the reaction L-aspartyl-tRNA(Asn) + L-glutamine + ATP + H2O = L-asparaginyl-tRNA(Asn) + L-glutamate + ADP + phosphate + 2 H(+). In terms of biological role, allows the formation of correctly charged Asn-tRNA(Asn) or Gln-tRNA(Gln) through the transamidation of misacylated Asp-tRNA(Asn) or Glu-tRNA(Gln) in organisms which lack either or both of asparaginyl-tRNA or glutaminyl-tRNA synthetases. The reaction takes place in the presence of glutamine and ATP through an activated phospho-Asp-tRNA(Asn) or phospho-Glu-tRNA(Gln). This is Aspartyl/glutamyl-tRNA(Asn/Gln) amidotransferase subunit B from Paramagnetospirillum magneticum (strain ATCC 700264 / AMB-1) (Magnetospirillum magneticum).